A 351-amino-acid polypeptide reads, in one-letter code: uncharacterized protein (351 aa).

Mn(2+) is bound by residues Asp-215, Asp-226, His-290, Glu-319, and Glu-333.

This sequence belongs to the peptidase M24B family. The cofactor is Mn(2+).

This is an uncharacterized protein from Staphylococcus aureus (strain USA300).